The sequence spans 281 residues: NAD kinase (281 aa).

Asp-61 functions as the Proton acceptor in the catalytic mechanism. Residues 61-62, 134-135, Arg-145, Asp-164, 175-180, and Gln-234 contribute to the NAD(+) site; these read DG, ND, and TAYSLS.

Belongs to the NAD kinase family. It depends on a divalent metal cation as a cofactor.

Its subcellular location is the cytoplasm. It carries out the reaction NAD(+) + ATP = ADP + NADP(+) + H(+). Its function is as follows. Involved in the regulation of the intracellular balance of NAD and NADP, and is a key enzyme in the biosynthesis of NADP. Catalyzes specifically the phosphorylation on 2'-hydroxyl of the adenosine moiety of NAD to yield NADP. This is NAD kinase from Clostridium botulinum (strain Kyoto / Type A2).